The chain runs to 414 residues: Serine hydroxymethyltransferase (414 aa).

(6S)-5,6,7,8-tetrahydrofolate is bound by residues leucine 116 and 120–122; that span reads GHL. Lysine 224 carries the N6-(pyridoxal phosphate)lysine modification. Residue 348-350 coordinates (6S)-5,6,7,8-tetrahydrofolate; that stretch reads SPF.

This sequence belongs to the SHMT family. As to quaternary structure, homodimer. It depends on pyridoxal 5'-phosphate as a cofactor.

Its subcellular location is the cytoplasm. The catalysed reaction is (6R)-5,10-methylene-5,6,7,8-tetrahydrofolate + glycine + H2O = (6S)-5,6,7,8-tetrahydrofolate + L-serine. It participates in one-carbon metabolism; tetrahydrofolate interconversion. The protein operates within amino-acid biosynthesis; glycine biosynthesis; glycine from L-serine: step 1/1. In terms of biological role, catalyzes the reversible interconversion of serine and glycine with tetrahydrofolate (THF) serving as the one-carbon carrier. This reaction serves as the major source of one-carbon groups required for the biosynthesis of purines, thymidylate, methionine, and other important biomolecules. Also exhibits THF-independent aldolase activity toward beta-hydroxyamino acids, producing glycine and aldehydes, via a retro-aldol mechanism. The sequence is that of Serine hydroxymethyltransferase from Campylobacter jejuni subsp. doylei (strain ATCC BAA-1458 / RM4099 / 269.97).